A 354-amino-acid chain; its full sequence is DNA integrity scanning protein DisA (354 aa).

Positions 6-144 constitute a DAC domain; that stretch reads GMKIKDTLKI…GDIKYVLRDS (139 aa). ATP contacts are provided by residues G73, L91, and 104–108; that span reads TRHRT.

This sequence belongs to the DisA family. As to quaternary structure, homooctamer. It depends on Mg(2+) as a cofactor.

It catalyses the reaction 2 ATP = 3',3'-c-di-AMP + 2 diphosphate. Its function is as follows. Participates in a DNA-damage check-point that is active prior to asymmetric division when DNA is damaged. DisA forms globular foci that rapidly scan along the chromosomes during sporulation, searching for lesions. When a lesion is present, DisA pauses at the lesion site. This triggers a cellular response that culminates in a temporary block in sporulation initiation. Functionally, also has diadenylate cyclase activity, catalyzing the condensation of 2 ATP molecules into cyclic di-AMP (c-di-AMP). c-di-AMP acts as a signaling molecule that couples DNA integrity with progression of sporulation. The rise in c-di-AMP level generated by DisA while scanning the chromosome, operates as a positive signal that advances sporulation; upon encountering a lesion, the DisA focus arrests at the damaged site and halts c-di-AMP synthesis. The polypeptide is DNA integrity scanning protein DisA (Clostridium botulinum (strain Eklund 17B / Type B)).